Here is a 383-residue protein sequence, read N- to C-terminus: MKIAAVIVAAGRGERAGGGVPKQYRRLGGFFVLTHTLLRLLHREVFDSIIVVVNPADADHIAAVEAELDIKLDTVPGGATRTASVRAGLERARDLGLDAVMIHDAARPFLGDALIDRLVKALADHPAVIPALPVADALFRGGDARMGDPVSRDGLYAAQTPQAFHLAPLLKAYARLGDTALPDDAAVIRAAGGEVALVPGEAENFKLTTRADFERAERQIMSETITVTGQGYDVHRLEPADVMWLCGVEIRAGLGLIGHSDADAGLHALTDAVLGAAGAGDIGQHFPPSDPQWKGAASDAFLLHAIKLLKQVGGELVHADITLIAERPKIGPHRDAMRARVAELTGLPEKRVNIAATTTEKLGFTGRGEGLAAQAIVTARLTT.

The tract at residues 1 to 226 (MKIAAVIVAA…ERQIMSETIT (226 aa)) is 2-C-methyl-D-erythritol 4-phosphate cytidylyltransferase. Positions 227–383 (VTGQGYDVHR…QAIVTARLTT (157 aa)) are 2-C-methyl-D-erythritol 2,4-cyclodiphosphate synthase. 2 residues coordinate a divalent metal cation: Asp233 and His235. 4-CDP-2-C-methyl-D-erythritol 2-phosphate contacts are provided by residues 233–235 (DVH) and 259–260 (HS). An a divalent metal cation-binding site is contributed by His267. 4-CDP-2-C-methyl-D-erythritol 2-phosphate contacts are provided by residues 281 to 283 (DIG), 357 to 360 (TTTE), Phe364, and Arg367.

It in the N-terminal section; belongs to the IspD/TarI cytidylyltransferase family. IspD subfamily. This sequence in the C-terminal section; belongs to the IspF family. A divalent metal cation is required as a cofactor.

It catalyses the reaction 2-C-methyl-D-erythritol 4-phosphate + CTP + H(+) = 4-CDP-2-C-methyl-D-erythritol + diphosphate. The catalysed reaction is 4-CDP-2-C-methyl-D-erythritol 2-phosphate = 2-C-methyl-D-erythritol 2,4-cyclic diphosphate + CMP. It participates in isoprenoid biosynthesis; isopentenyl diphosphate biosynthesis via DXP pathway; isopentenyl diphosphate from 1-deoxy-D-xylulose 5-phosphate: step 2/6. Its pathway is isoprenoid biosynthesis; isopentenyl diphosphate biosynthesis via DXP pathway; isopentenyl diphosphate from 1-deoxy-D-xylulose 5-phosphate: step 4/6. Bifunctional enzyme that catalyzes the formation of 4-diphosphocytidyl-2-C-methyl-D-erythritol from CTP and 2-C-methyl-D-erythritol 4-phosphate (MEP) (IspD), and catalyzes the conversion of 4-diphosphocytidyl-2-C-methyl-D-erythritol 2-phosphate (CDP-ME2P) to 2-C-methyl-D-erythritol 2,4-cyclodiphosphate (ME-CPP) with a corresponding release of cytidine 5-monophosphate (CMP) (IspF). The polypeptide is Bifunctional enzyme IspD/IspF (Maricaulis maris (strain MCS10) (Caulobacter maris)).